Here is a 508-residue protein sequence, read N- to C-terminus: Photosystem II CP47 reaction center protein (508 aa).

Transmembrane regions (helical) follow at residues Ser21–Ser36, Ile101–Trp115, Gly140–Phe156, Ile203–Ser218, Val237–Val252, and Thr457–Arg472.

Belongs to the PsbB/PsbC family. PsbB subfamily. PSII is composed of 1 copy each of membrane proteins PsbA, PsbB, PsbC, PsbD, PsbE, PsbF, PsbH, PsbI, PsbJ, PsbK, PsbL, PsbM, PsbT, PsbX, PsbY, PsbZ, Psb30/Ycf12, at least 3 peripheral proteins of the oxygen-evolving complex and a large number of cofactors. It forms dimeric complexes. Binds multiple chlorophylls. PSII binds additional chlorophylls, carotenoids and specific lipids. serves as cofactor.

It localises to the plastid. Its subcellular location is the chloroplast thylakoid membrane. One of the components of the core complex of photosystem II (PSII). It binds chlorophyll and helps catalyze the primary light-induced photochemical processes of PSII. PSII is a light-driven water:plastoquinone oxidoreductase, using light energy to abstract electrons from H(2)O, generating O(2) and a proton gradient subsequently used for ATP formation. This chain is Photosystem II CP47 reaction center protein, found in Adiantum capillus-veneris (Maidenhair fern).